A 472-amino-acid chain; its full sequence is Carboxypeptidase E (472 aa).

The first 21 residues, 1 to 21 (MLHAMRPVLLVAALLAVTAHA), serve as a signal peptide directing secretion. In terms of domain architecture, Peptidase M14 spans 39–359 (HYHNQAQLEA…KSIFEYVWKS (321 aa)). Residues His-101 and Glu-104 each contribute to the Zn(2+) site. N-linked (GlcNAc...) asparagine glycosylation is present at Asn-134. Zn(2+) is bound at residue His-232. Glu-329 serves as the catalytic Proton donor/acceptor. N-linked (GlcNAc...) asparagine glycans are attached at residues Asn-385 and Asn-428.

This sequence belongs to the peptidase M14 family. Requires Zn(2+) as cofactor. In terms of tissue distribution, expression is restricted to the nervous system.

It is found in the cell projection. The protein resides in the axon. It localises to the perikaryon. The protein localises to the cytoplasmic vesicle. Its subcellular location is the secretory vesicle lumen. It catalyses the reaction Release of C-terminal arginine or lysine residues from polypeptides.. In terms of biological role, during FMRFamide-like peptide (FaRPs or FLP) and neuropeptide-like protein (NLP) precursor processing, catalyzes the removal of Arg or Lys residues from the C-terminus following the initial endoprotease cleavage. By processing neuropeptides, modulates basal acetylcholine release at the ventral cord neuromuscular junctions. Involved in egg-laying, defecation and locomotion. By processing FLP neuropeptides, regulates the turning step of male mating behavior. Involved in reducing pharyngeal pumping in response to high CO(2) levels. This is Carboxypeptidase E from Caenorhabditis elegans.